A 266-amino-acid polypeptide reads, in one-letter code: Ribosomal RNA small subunit methyltransferase A (266 aa).

S-adenosyl-L-methionine contacts are provided by Asn-13, Leu-15, Gly-40, Glu-61, Asp-86, and Asn-110.

The protein belongs to the class I-like SAM-binding methyltransferase superfamily. rRNA adenine N(6)-methyltransferase family. RsmA subfamily.

Its subcellular location is the cytoplasm. The catalysed reaction is adenosine(1518)/adenosine(1519) in 16S rRNA + 4 S-adenosyl-L-methionine = N(6)-dimethyladenosine(1518)/N(6)-dimethyladenosine(1519) in 16S rRNA + 4 S-adenosyl-L-homocysteine + 4 H(+). Its function is as follows. Specifically dimethylates two adjacent adenosines (A1518 and A1519) in the loop of a conserved hairpin near the 3'-end of 16S rRNA in the 30S particle. May play a critical role in biogenesis of 30S subunits. This chain is Ribosomal RNA small subunit methyltransferase A, found in Hydrogenovibrio crunogenus (strain DSM 25203 / XCL-2) (Thiomicrospira crunogena).